A 345-amino-acid polypeptide reads, in one-letter code: Methylthioribose-1-phosphate isomerase (345 aa).

Substrate is bound by residues 47–49, Arg-90, and Gln-199; that span reads RGA. The Proton donor role is filled by Asp-240. Residue 250 to 251 participates in substrate binding; it reads NK.

It belongs to the eIF-2B alpha/beta/delta subunits family. MtnA subfamily.

It carries out the reaction 5-(methylsulfanyl)-alpha-D-ribose 1-phosphate = 5-(methylsulfanyl)-D-ribulose 1-phosphate. It participates in amino-acid biosynthesis; L-methionine biosynthesis via salvage pathway; L-methionine from S-methyl-5-thio-alpha-D-ribose 1-phosphate: step 1/6. Its function is as follows. Catalyzes the interconversion of methylthioribose-1-phosphate (MTR-1-P) into methylthioribulose-1-phosphate (MTRu-1-P). This chain is Methylthioribose-1-phosphate isomerase, found in Crocosphaera subtropica (strain ATCC 51142 / BH68) (Cyanothece sp. (strain ATCC 51142)).